We begin with the raw amino-acid sequence, 203 residues long: Small ribosomal subunit protein eS1 (203 aa).

The protein belongs to the eukaryotic ribosomal protein eS1 family.

This Methanosarcina acetivorans (strain ATCC 35395 / DSM 2834 / JCM 12185 / C2A) protein is Small ribosomal subunit protein eS1.